The primary structure comprises 351 residues: Transaldolase (351 aa).

The active-site Schiff-base intermediate with substrate is K138.

It belongs to the transaldolase family. Type 2 subfamily.

The protein localises to the cytoplasm. It catalyses the reaction D-sedoheptulose 7-phosphate + D-glyceraldehyde 3-phosphate = D-erythrose 4-phosphate + beta-D-fructose 6-phosphate. It functions in the pathway carbohydrate degradation; pentose phosphate pathway; D-glyceraldehyde 3-phosphate and beta-D-fructose 6-phosphate from D-ribose 5-phosphate and D-xylulose 5-phosphate (non-oxidative stage): step 2/3. Functionally, transaldolase is important for the balance of metabolites in the pentose-phosphate pathway. The chain is Transaldolase from Neisseria meningitidis serogroup C / serotype 2a (strain ATCC 700532 / DSM 15464 / FAM18).